Consider the following 444-residue polypeptide: Argininosuccinate synthase (444 aa).

ATP is bound by residues 18–26 and alanine 44; that span reads AFSGGLDTS. An L-citrulline-binding site is contributed by tyrosine 100. ATP contacts are provided by glycine 130 and threonine 132. L-aspartate contacts are provided by threonine 132, asparagine 136, and aspartate 137. Asparagine 136 is a binding site for L-citrulline. Aspartate 137 serves as a coordination point for ATP. Positions 140 and 193 each coordinate L-citrulline. Aspartate 195 provides a ligand contact to ATP. Residues threonine 202, glutamate 204, and glutamate 281 each coordinate L-citrulline.

It belongs to the argininosuccinate synthase family. Type 2 subfamily. In terms of assembly, homotetramer.

The protein localises to the cytoplasm. The catalysed reaction is L-citrulline + L-aspartate + ATP = 2-(N(omega)-L-arginino)succinate + AMP + diphosphate + H(+). It participates in amino-acid biosynthesis; L-arginine biosynthesis; L-arginine from L-ornithine and carbamoyl phosphate: step 2/3. This is Argininosuccinate synthase from Actinobacillus succinogenes (strain ATCC 55618 / DSM 22257 / CCUG 43843 / 130Z).